The chain runs to 116 residues: NADH-ubiquinone oxidoreductase chain 3 (116 aa).

Helical transmembrane passes span 3 to 23 (LITTIITITITLSAVLATISF), 56 to 76 (FFLIAILFLLFDLEIALLLPL), and 87 to 107 (LTLIWSTAVLALLTLGLIYEW).

It belongs to the complex I subunit 3 family.

It localises to the mitochondrion membrane. It carries out the reaction a ubiquinone + NADH + 5 H(+)(in) = a ubiquinol + NAD(+) + 4 H(+)(out). Functionally, core subunit of the mitochondrial membrane respiratory chain NADH dehydrogenase (Complex I) that is believed to belong to the minimal assembly required for catalysis. Complex I functions in the transfer of electrons from NADH to the respiratory chain. The immediate electron acceptor for the enzyme is believed to be ubiquinone. In Oncorhynchus keta (Chum salmon), this protein is NADH-ubiquinone oxidoreductase chain 3 (MT-ND3).